The sequence spans 95 residues: Large ribosomal subunit protein bL25 (95 aa).

Belongs to the bacterial ribosomal protein bL25 family. Part of the 50S ribosomal subunit; part of the 5S rRNA/L5/L18/L25 subcomplex. Contacts the 5S rRNA. Binds to the 5S rRNA independently of L5 and L18.

Functionally, this is one of the proteins that binds to the 5S RNA in the ribosome where it forms part of the central protuberance. The sequence is that of Large ribosomal subunit protein bL25 from Shewanella loihica (strain ATCC BAA-1088 / PV-4).